The sequence spans 83 residues: Hainantoxin-III (83 aa).

A signal peptide spans 1 to 21 (MKASMFLALAGLVLLFVVGYA). The propeptide occupies 22–48 (SESEEKEFPRELLSKIFALDDFKGEER). 3 cysteine pairs are disulfide-bonded: Cys50–Cys65, Cys57–Cys70, and Cys64–Cys77. Position 81 is a leucine amide (Leu81).

The protein belongs to the neurotoxin 10 (Hwtx-1) family. 15 (Hntx-3) subfamily. As to quaternary structure, monomer. Expressed by the venom gland.

The protein resides in the secreted. In terms of biological role, selective antagonist of neuronal tetrodotoxin (TTX)-sensitive voltage-gated sodium channels (IC(50)=1270 nM on Nav1.1/SCN1A, 270 nM on Nav1.2/SCN2A, 491 nM on Nav1.3/SCN3A and 232 nM on Nav1.7/SCN9A). This toxin suppress Nav1.7 current amplitude without significantly altering the activation, inactivation, and repriming kinetics. Short extreme depolarizations partially activate the toxin-bound channel, indicating voltage-dependent inhibition of this toxin. This toxin increases the deactivation of the Nav1.7 current after extreme depolarizations. The toxin-Nav1.7 complex is gradually dissociated upon prolonged strong depolarizations in a voltage-dependent manner, and the unbound toxin rebinds to Nav1.7 after a long repolarization. Moreover, analysis of chimeric channels showed that the DIIS3-S4 linker is critical for toxin binding to Nav1.7. These data are consistent with this toxin interacting with Nav1.7 site 4 and trapping the domain II voltage sensor in the closed state. The polypeptide is Hainantoxin-III (Cyriopagopus hainanus (Chinese bird spider)).